Consider the following 240-residue polypeptide: 1-(5-phosphoribosyl)-5-[(5-phosphoribosylamino)methylideneamino] imidazole-4-carboxamide isomerase (240 aa).

Catalysis depends on D8, which acts as the Proton acceptor. D129 (proton donor) is an active-site residue.

The protein belongs to the HisA/HisF family.

The protein resides in the cytoplasm. The enzyme catalyses 1-(5-phospho-beta-D-ribosyl)-5-[(5-phospho-beta-D-ribosylamino)methylideneamino]imidazole-4-carboxamide = 5-[(5-phospho-1-deoxy-D-ribulos-1-ylimino)methylamino]-1-(5-phospho-beta-D-ribosyl)imidazole-4-carboxamide. It functions in the pathway amino-acid biosynthesis; L-histidine biosynthesis; L-histidine from 5-phospho-alpha-D-ribose 1-diphosphate: step 4/9. The polypeptide is 1-(5-phosphoribosyl)-5-[(5-phosphoribosylamino)methylideneamino] imidazole-4-carboxamide isomerase (Clostridioides difficile (strain 630) (Peptoclostridium difficile)).